Reading from the N-terminus, the 342-residue chain is MSTDIRSKFLQVYDTLKSELINDPAFEFDDDSRQWIEKMLDYNVPGGKLNRGLSVIDSYQLLKGGKLTDDEIFHASALGWCVEWLQAYFLVLDDIMDESHTRRGQPCWFRLPKVGMIAANDGIILRNHVPRILKKHFRGKPYYVDLVDLFNEVEFQTASGQMIDLITTLVGEKDLSKYSLSIHRRIVQYKTAYYSFYLPVACALLMFGEDLEKHVEVKNVLVEMGTYFQVQDDYLDCFGAPEVIGKIGTDIEDFKCSWLVVKALELANEEQKKVLHENYGKKDPSPVAKVKELYNTLNLQGVFEDYENTSYKKLITSIEGHPSKAVQAVLKSFLGKIYRRQK.

Residues lysine 48, arginine 51, and glutamine 86 each coordinate isopentenyl diphosphate. Mg(2+)-binding residues include aspartate 93 and aspartate 97. Arginine 102 serves as a coordination point for dimethylallyl diphosphate. Residue arginine 103 participates in isopentenyl diphosphate binding. The dimethylallyl diphosphate site is built by lysine 190, threonine 191, glutamine 229, lysine 246, and lysine 255.

This sequence belongs to the FPP/GGPP synthase family. Requires Mg(2+) as cofactor.

It localises to the cytoplasm. It catalyses the reaction isopentenyl diphosphate + dimethylallyl diphosphate = (2E)-geranyl diphosphate + diphosphate. It carries out the reaction isopentenyl diphosphate + (2E)-geranyl diphosphate = (2E,6E)-farnesyl diphosphate + diphosphate. It functions in the pathway isoprenoid biosynthesis; farnesyl diphosphate biosynthesis; farnesyl diphosphate from geranyl diphosphate and isopentenyl diphosphate: step 1/1. The protein operates within isoprenoid biosynthesis; geranyl diphosphate biosynthesis; geranyl diphosphate from dimethylallyl diphosphate and isopentenyl diphosphate: step 1/1. Its function is as follows. Catalyzes the sequential condensation of isopentenyl pyrophosphate with the allylic pyrophosphates, dimethylallyl pyrophosphate, and then with the resultant geranylpyrophosphate to the ultimate product farnesyl pyrophosphate. This Parthenium argentatum (Guayule rubber plant) protein is Farnesyl pyrophosphate synthase 2 (FPS2).